The sequence spans 400 residues: Deoxyguanosinetriphosphate triphosphohydrolase-like protein (400 aa).

In terms of domain architecture, HD spans Arg73 to Asn215.

This sequence belongs to the dGTPase family. Type 2 subfamily.

The sequence is that of Deoxyguanosinetriphosphate triphosphohydrolase-like protein from Bartonella quintana (strain Toulouse) (Rochalimaea quintana).